A 518-amino-acid chain; its full sequence is Glutamate--cysteine ligase (518 aa).

It belongs to the glutamate--cysteine ligase type 1 family. Type 1 subfamily.

It carries out the reaction L-cysteine + L-glutamate + ATP = gamma-L-glutamyl-L-cysteine + ADP + phosphate + H(+). It participates in sulfur metabolism; glutathione biosynthesis; glutathione from L-cysteine and L-glutamate: step 1/2. This chain is Glutamate--cysteine ligase, found in Escherichia coli O8 (strain IAI1).